The sequence spans 2531 residues: Putative neurobeachin homolog (2531 aa).

Composition is skewed to acidic residues over residues 1–10, 26–35, and 62–74; these read MDISETEYND, EDEVNDEESN, and EPSD…EESE. Disordered regions lie at residues 1–101, 1363–1398, 1420–1440, and 1642–1670; these read MDIS…SPPP, NDGD…DNGG, EELK…MPPQ, and RFVP…EISE. Over residues 1363–1379 the composition is skewed to basic and acidic residues; that stretch reads NDGDHASIKNGSDHSEN. A compositionally biased stretch (polar residues) spans 1427–1440; the sequence is QSNGRRPSTLMPPQ. The segment covering 1650–1670 has biased composition (basic and acidic residues); it reads SRHEEANLPEGEKNEEPEISE. The BEACH-type PH domain maps to 1714 to 1822; sequence PSSQSACFST…TVRKVVYQLP (109 aa). Residues 1841-2130 form the BEACH domain; sequence MTPRQLFKHS…QLLAEAHPPR (290 aa). WD repeat units lie at residues 2289–2332, 2350–2389, 2429–2468, and 2471–2510; these read GHGD…GFIA, GHEA…LRRI, LSEE…KLYT, and PLNS…WHYE.

The protein belongs to the WD repeat neurobeachin family. In terms of assembly, interacts with RII subunit of PKA.

It is found in the cytoplasm. It localises to the membrane. The protein localises to the nucleus. In terms of biological role, binds to type II regulatory subunits of protein kinase A and anchors/targets them to the membrane. May anchor the kinase to cytoskeletal and/or organelle-associated proteins. Regulates endosomal traffic in polarized epithelial cells such as the vulval precursor cells and intestinal cells. Thought to act as a negative regulator of lin-12 activity in vulval precursor cells. May have a role in the internalization process from basolateral surface of polarized epithelial cells. In Caenorhabditis briggsae, this protein is Putative neurobeachin homolog.